We begin with the raw amino-acid sequence, 440 residues long: tRNA modification GTPase MnmE (440 aa).

Residues R22, E79, and K118 each contribute to the (6S)-5-formyl-5,6,7,8-tetrahydrofolate site. Positions 214–366 constitute a TrmE-type G domain; the sequence is GLIFTILGKP…LKTMLEAEAR (153 aa). Residues 224–229, 243–249, and 268–271 contribute to the GTP site; these read NAGKSS, SSQPGTT, and DTAG. 2 residues coordinate Mg(2+): S228 and T249. Position 440 (K440) interacts with (6S)-5-formyl-5,6,7,8-tetrahydrofolate.

It belongs to the TRAFAC class TrmE-Era-EngA-EngB-Septin-like GTPase superfamily. TrmE GTPase family. In terms of assembly, homodimer. Heterotetramer of two MnmE and two MnmG subunits. K(+) is required as a cofactor.

The protein localises to the cytoplasm. In terms of biological role, exhibits a very high intrinsic GTPase hydrolysis rate. Involved in the addition of a carboxymethylaminomethyl (cmnm) group at the wobble position (U34) of certain tRNAs, forming tRNA-cmnm(5)s(2)U34. This Granulibacter bethesdensis (strain ATCC BAA-1260 / CGDNIH1) protein is tRNA modification GTPase MnmE.